We begin with the raw amino-acid sequence, 120 residues long: MFYWILLALAIATEITGTLSMKWASVGNGNAGFILMLVMITLSYIFLSFAVKKIALGVAYALWEGIGILFITIFSVLLFDEALSTMKIAGLLTLVAGIVLIKSGTRKPGKPVKGAARATI.

4 helical membrane passes run 1-21 (MFYW…TLSM), 31-51 (AGFI…SFAV), 54-74 (IALG…ITIF), and 81-101 (EALS…IVLI).

This sequence belongs to the drug/metabolite transporter (DMT) superfamily. Small multidrug resistance (SMR) (TC 2.A.7.1) family. MdtJ subfamily. As to quaternary structure, forms a complex with MdtI.

The protein resides in the cell inner membrane. Functionally, catalyzes the excretion of spermidine. In Salmonella paratyphi A (strain ATCC 9150 / SARB42), this protein is Spermidine export protein MdtJ.